The primary structure comprises 176 residues: Ribosome rescue factor SmrB (176 aa).

The region spanning 98–173 (LDLHGLTQKQ…GTAALLLLIE (76 aa)) is the Smr domain.

Belongs to the SmrB family. Associates with collided ribosomes, but not with correctly translating polysomes.

Its function is as follows. Acts as a ribosome collision sensor. Detects stalled/collided disomes (pairs of ribosomes where the leading ribosome is stalled and a second ribosome has collided with it) and endonucleolytically cleaves mRNA at the 5' boundary of the stalled ribosome. Stalled/collided disomes form a new interface (primarily via the 30S subunits) that binds SmrB. Cleaved mRNA becomes available for tmRNA ligation, leading to ribosomal subunit dissociation and rescue of stalled ribosomes. This is Ribosome rescue factor SmrB from Yersinia pseudotuberculosis serotype O:1b (strain IP 31758).